Consider the following 609-residue polypeptide: UvrABC system protein C (609 aa).

Residues 13 to 91 (HEPGVYRMYD…IKLYQPRYNV (79 aa)) form the GIY-YIG domain. The UVR domain maps to 201 to 236 (QQVLDYLIGKMEQASRNLDFEQAARYRDQIQAVRSV).

It belongs to the UvrC family. In terms of assembly, interacts with UvrB in an incision complex.

The protein resides in the cytoplasm. Its function is as follows. The UvrABC repair system catalyzes the recognition and processing of DNA lesions. UvrC both incises the 5' and 3' sides of the lesion. The N-terminal half is responsible for the 3' incision and the C-terminal half is responsible for the 5' incision. The protein is UvrABC system protein C of Haemophilus influenzae (strain ATCC 51907 / DSM 11121 / KW20 / Rd).